Consider the following 504-residue polypeptide: Arabinose import ATP-binding protein AraG (504 aa).

ABC transporter domains are found at residues 8–243 and 256–499; these read LSFR…MVGR and YGEE…MPKV. Residue 40–47 coordinates ATP; it reads GENGAGKS.

Belongs to the ABC transporter superfamily. Arabinose importer (TC 3.A.1.2.2) family. The complex is composed of two ATP-binding proteins (AraG), two transmembrane proteins (AraH) and a solute-binding protein (AraF).

It localises to the cell inner membrane. The enzyme catalyses L-arabinose(out) + ATP + H2O = L-arabinose(in) + ADP + phosphate + H(+). In terms of biological role, part of the ABC transporter complex AraFGH involved in arabinose import. Responsible for energy coupling to the transport system. The chain is Arabinose import ATP-binding protein AraG from Shigella flexneri.